The chain runs to 483 residues: Cobyric acid synthase (483 aa).

The 188-residue stretch at A251–F438 folds into the GATase cobBQ-type domain. C333 serves as the catalytic Nucleophile. H430 is an active-site residue.

The protein belongs to the CobB/CobQ family. CobQ subfamily.

It functions in the pathway cofactor biosynthesis; adenosylcobalamin biosynthesis. Its function is as follows. Catalyzes amidations at positions B, D, E, and G on adenosylcobyrinic A,C-diamide. NH(2) groups are provided by glutamine, and one molecule of ATP is hydrogenolyzed for each amidation. The protein is Cobyric acid synthase of Brucella abortus (strain S19).